The following is a 323-amino-acid chain: Transcription factor JunD (323 aa).

Disordered regions lie at residues 138–173 (QNQL…APGL) and 197–221 (PFAA…QIVP). Positions 141–167 (LGGGGGPNGGAAAAGGGGGGGGGGGGE) are enriched in gly residues. The segment covering 198–212 (FAAPPPRLPPPPPPP) has biased composition (pro residues). The tract at residues 242–269 (RIKAERKRLRNRIAASKCRKRKLERISR) is basic motif. The bZIP domain maps to 242–305 (RIKAERKRLR…AQLKQKVLSH (64 aa)). The interval 270 to 298 (LEEKVKSLKSQNTELASTASLLREQVAQL) is leucine-zipper.

Belongs to the bZIP family. Jun subfamily. As to quaternary structure, binds DNA as a dimer.

It is found in the nucleus. This chain is Transcription factor JunD (JUND), found in Gallus gallus (Chicken).